A 263-amino-acid chain; its full sequence is Putative inactive caspase B (263 aa).

Residues 1–8 (MMCEDASD) constitute a propeptide, removed in mature form by cps-1 or ced-3.

This sequence belongs to the peptidase C14A family. In terms of assembly, interacts with ced-3 (via large subunit p17 or small subunit p13); the interaction inhibits ced-3 autoactivation. Post-translationally, cleavage by csp-1 isoform b or ced-3 removes the propeptide and generates subunit p31 in vitro. An additional cleavage at Asp-149 generates the 2 subunits p17 and p14 but this cleavage appears to be less efficient. Specifically expressed in the hermaphrodite germline.

It is found in the cytoplasm. Its function is as follows. Putative inactive caspase. In the germline, binds caspase ced-3 zymogen and prevents ced-3 autoactivation. Does not affect the caspase activity of mature ced-3 and ced-4-mediated mature ced-3 activation. Negatively regulates germline apoptosis by inhibiting autocleavage of caspase ced-3. Involved in fertility. Functionally, putative inactive caspase. Dispensable for the inhibition of germline apoptosis. The protein is Putative inactive caspase B of Caenorhabditis elegans.